A 56-amino-acid chain; its full sequence is Small ribosomal subunit protein uS14 (56 aa).

The Zn(2+) site is built by Cys-21, Cys-24, Cys-39, and Cys-42.

Belongs to the universal ribosomal protein uS14 family. In terms of assembly, component of the small ribosomal subunit. Mature ribosomes consist of a small (40S) and a large (60S) subunit. The 40S subunit contains about 32 different proteins and 1 molecule of RNA (18S). The 60S subunit contains 45 different proteins and 3 molecules of RNA (25S, 5.8S and 5S). Zn(2+) serves as cofactor.

It is found in the cytoplasm. In terms of biological role, component of the ribosome, a large ribonucleoprotein complex responsible for the synthesis of proteins in the cell. The small ribosomal subunit (SSU) binds messenger RNAs (mRNAs) and translates the encoded message by selecting cognate aminoacyl-transfer RNA (tRNA) molecules. The large subunit (LSU) contains the ribosomal catalytic site termed the peptidyl transferase center (PTC), which catalyzes the formation of peptide bonds, thereby polymerizing the amino acids delivered by tRNAs into a polypeptide chain. The nascent polypeptides leave the ribosome through a tunnel in the LSU and interact with protein factors that function in enzymatic processing, targeting, and the membrane insertion of nascent chains at the exit of the ribosomal tunnel. The sequence is that of Small ribosomal subunit protein uS14 from Candida albicans (strain SC5314 / ATCC MYA-2876) (Yeast).